A 28-amino-acid polypeptide reads, in one-letter code: Dermaseptin-DI2 (28 aa).

Expressed by the skin glands.

The protein localises to the secreted. Functionally, has antibacterial activity against the Gram-positive bacteria S.aureus and E.faecalis, and the Gram-negative bacteria P.aeruginosa and E.coli. Has antiprotozoal activity against T.cruzi. Has antifungal activity against the yeasts C.tropicalis (MIC=10.9 uM), C.guilliermondii (MIC=21.8 uM), C.albicans (MIC=21.8 uM) and C.albicans ATCC 1023 (MIC=10.9 uM). Decreases viability of murine peritoneal cells. Fuses to, and disrupts liposomes. This is Dermaseptin-DI2 from Phyllomedusa distincta (Monkey frog).